The following is a 316-amino-acid chain: Myb-related protein 306 (316 aa).

2 HTH myb-type domains span residues 9–65 and 66–116; these read KIGV…RPGI and KRGD…KKKL. DNA-binding regions (H-T-H motif) lie at residues 37–61 and 89–112; these read WRAI…TNYL and WAAI…NTHL. Disordered regions lie at residues 119–144, 168–193, and 209–230; these read LQSP…SKGQ, KTSS…QAST, and KKSP…TTTS. The span at 135-144 shows a compositional bias: basic and acidic residues; that stretch reads DSDKSVSKGQ. Over residues 181–193 the composition is skewed to polar residues; the sequence is VQTTQPRPFQAST. A compositionally biased stretch (low complexity) spans 216–230; sequence SSTSQAGSSESTTTS.

As to expression, expressed in flowers, leaves and weakly in seed pods.

Its subcellular location is the nucleus. In terms of biological role, transcription factor. This is Myb-related protein 306 from Antirrhinum majus (Garden snapdragon).